A 155-amino-acid polypeptide reads, in one-letter code: Large ribosomal subunit protein eL24 (155 aa).

Basic and acidic residues predominate over residues 94 to 129 (RSLKPEVRKAQRDEKKKADKEKKKADKAARKSEKAK). The disordered stretch occupies residues 94–155 (RSLKPEVRKA…AFQKVAATSR (62 aa)).

It belongs to the eukaryotic ribosomal protein eL24 family.

This Kluyveromyces lactis (strain ATCC 8585 / CBS 2359 / DSM 70799 / NBRC 1267 / NRRL Y-1140 / WM37) (Yeast) protein is Large ribosomal subunit protein eL24 (RPL24).